The chain runs to 104 residues: L-rhamnose mutarotase (104 aa).

Tyr-18 contributes to the substrate binding site. The active-site Proton donor is His-22. Residues Tyr-41 and 76–77 each bind substrate; that span reads WW.

This sequence belongs to the rhamnose mutarotase family. In terms of assembly, homodimer.

The protein localises to the cytoplasm. The enzyme catalyses alpha-L-rhamnose = beta-L-rhamnose. It functions in the pathway carbohydrate metabolism; L-rhamnose metabolism. Its function is as follows. Involved in the anomeric conversion of L-rhamnose. This chain is L-rhamnose mutarotase, found in Shigella flexneri serotype 5b (strain 8401).